Consider the following 194-residue polypeptide: Chromophore lyase CpcT/CpeT 1 (194 aa).

It belongs to the CpcT/CpeT biliprotein lyase family.

Functionally, covalently attaches a chromophore to Cys residue(s) of phycobiliproteins. The sequence is that of Chromophore lyase CpcT/CpeT 1 from Microcystis aeruginosa (strain NIES-843 / IAM M-2473).